We begin with the raw amino-acid sequence, 473 residues long: Zinc finger and SCAN domain-containing protein 21 (473 aa).

K27 participates in a covalent cross-link: Glycyl lysine isopeptide (Lys-Gly) (interchain with G-Cter in SUMO2). The 83-residue stretch at 45–127 folds into the SCAN box domain; the sequence is RQRFRQFGYH…TLLEDLEREL (83 aa). The segment at 127–167 is disordered; that stretch reads LDEPGHQVSTPPNEQKPVWEKISSSGTAKESPSSMQPQPLE. Polar residues predominate over residues 148–165; that stretch reads ISSSGTAKESPSSMQPQP. Residues K221 and K232 each participate in a glycyl lysine isopeptide (Lys-Gly) (interchain with G-Cter in SUMO2) cross-link. Residues 244 to 272 are disordered; sequence LENEKGTKPPLQEAGSKKGRESVPTKPTP. The segment covering 258-272 has biased composition (basic and acidic residues); it reads GSKKGRESVPTKPTP. C2H2-type zinc fingers lie at residues 277-299, 305-327, 333-354, 360-382, 388-410, 416-438, and 444-466; these read YICA…RRTH, YVCT…YRTH, YDCK…QRMH, YQCK…YRIH, YQCN…QRLH, YKCK…HRIH, and YWCH…QRVH. Residue K349 forms a Glycyl lysine isopeptide (Lys-Gly) (interchain with G-Cter in SUMO2) linkage.

Belongs to the krueppel C2H2-type zinc-finger protein family.

The protein resides in the nucleus. Its function is as follows. Strong transcriptional activator. Plays an important role in spermatogenesis; essential for the progression of meiotic prophase I in spermatocytes. The polypeptide is Zinc finger and SCAN domain-containing protein 21 (ZSCAN21) (Pan troglodytes (Chimpanzee)).